We begin with the raw amino-acid sequence, 712 residues long: Osmolarity two-component system protein SSK1 (712 aa).

Residues 73–114 (ADNTSSNNTNDNSCRSKSNGAGSGANLSVNSNTKSSVSPTAG) form a disordered region. A compositionally biased stretch (low complexity) spans 74 to 85 (DNTSSNNTNDNS). Polar residues predominate over residues 87-113 (RSKSNGAGSGANLSVNSNTKSSVSPTA). Phosphoserine occurs at positions 110, 195, 327, 351, 368, and 380. Residues 340 to 362 (KADLKGKDGNSSPQEFKLITDEE) form a disordered region. The disordered stretch occupies residues 448–468 (EVQRRKEDVTPASPILTSSQT). Positions 505–647 (NVLIVEDNVI…WLSKKITEWG (143 aa)) constitute a Response regulatory domain. A 4-aspartylphosphate modification is found at Asp-554. Residues 672–712 (KSPQKPIAPSNPHSFKQATSMTPTHSPVRKNSNLSPTQIEL) form a disordered region. Ser-673 carries the phosphoserine modification. The segment covering 682–712 (NPHSFKQATSMTPTHSPVRKNSNLSPTQIEL) has biased composition (polar residues). Residue Thr-693 is modified to Phosphothreonine. 2 positions are modified to phosphoserine: Ser-703 and Ser-706.

This sequence belongs to the SSK1 family. In terms of assembly, interacts with SSK2, SSK22 and YPD1. Post-translationally, the phosphorelay mechanism involves the sequential transfer of a phosphate group from 'His-576' (H1) to 'Asp-1144' (D1) of SLN1, then to 'His-64' (H2) of YPD1 and finally to Asp-554 (D2) of SSK1.

It localises to the cytoplasm. In terms of biological role, final receptor of the SLN1-YPD1-SSK1 two-component regulatory system, which controls activity of the HOG1 pathway in response to changes in the osmolarity of the extracellular environment. Under normal osmotic conditions, maintained in a phosphorylated and inactive state by the phosphorelay intermediate protein YPD1. Under conditions of high osmolarity, the histidine kinase SLN1 is no longer active and the unphosphorylated form of SSK1 interacts with and activates SSK2 and SSK22, two MAPKKKs that further stimulate the PBS2-HOG1 MAPKK-MAPK cascade. Unphosphorylated SSK1 is subsequently degraded by the UBC7-dependent ubiquitin-proteasome system to down-regulate the HOG1 pathway after completion of the osmotic adaptation. This chain is Osmolarity two-component system protein SSK1, found in Saccharomyces cerevisiae (strain ATCC 204508 / S288c) (Baker's yeast).